The primary structure comprises 175 residues: Small ribosomal subunit protein uS5 (175 aa).

In terms of domain architecture, S5 DRBM spans W19–V82.

The protein belongs to the universal ribosomal protein uS5 family. Part of the 30S ribosomal subunit. Contacts proteins S4 and S8.

With S4 and S12 plays an important role in translational accuracy. In terms of biological role, located at the back of the 30S subunit body where it stabilizes the conformation of the head with respect to the body. The protein is Small ribosomal subunit protein uS5 of Salinibacter ruber (strain DSM 13855 / M31).